Reading from the N-terminus, the 943-residue chain is Nuclear factor of activated T-cells, cytoplasmic 1 (943 aa).

The segment at 22-48 (GRGETLGPAPRAGGTMKSAEEEHYGYA) is disordered. The calcineurin-binding stretch occupies residues 118–123 (PRIEIT). The interval 126–218 (LGLYHNNNQF…CVSPKTTDPE (93 aa)) is transactivation domain A (TAD-A). Residues 200–298 (PQTSPWQSPC…GSPRVSVTDD (99 aa)) form a disordered region. Polar residues predominate over residues 201–214 (QTSPWQSPCVSPKT). Repeat copies occupy residues 203–219 (SPWQ…DPEE) and 233–249 (SPRH…VTEE). The 3 X SP repeats stretch occupies residues 203–298 (SPWQSPCVSP…GSPRVSVTDD (96 aa)). Residues Ser233 and Ser237 each carry the phosphoserine modification. Positions 236–248 (HSPSTSPRASVTE) are enriched in polar residues. At Ser245 the chain carries Phosphoserine; by PKA. Positions 265 to 267 (KRK) match the Nuclear localization signal motif. Position 269 is a phosphoserine; by PKA (Ser269). Positions 276-288 (PYSPHHSPTPSPH) are enriched in pro residues. Residues 282 to 298 (SPTPSPHGSPRVSVTDD) form repeat 3. The residue at position 294 (Ser294) is a Phosphoserine; by PKA. Positions 310–321 (SAIVAAINALTT) match the Nuclear export signal motif. The 183-residue stretch at 410–592 (PTLPALDWQL…NPIECSQRSA (183 aa)) folds into the RHD domain. A DNA-binding region spans residues 439-446 (RAHYETEG). A Nuclear localization signal motif is present at residues 682 to 684 (KRK). The segment at 703–943 (TEPTDDYEPA…NDLSSTSTHS (241 aa)) is transactivation domain B (TAD-B). Residues 787 to 912 (HLGLPQPAGE…SPNLAPIPVT (126 aa)) form a disordered region. Residues 846-855 (SPSPPLPPAT) show a composition bias toward pro residues. The Nuclear export signal signature appears at 924 to 933 (YLDDVNEIIR).

As to quaternary structure, member of the multicomponent NFATC transcription complex that consists of at least two components, a pre-existing cytoplasmic component NFATC2 and an inducible nuclear component NFATC1. Other members such as NFATC4, NFATC3 or members of the activating protein-1 family, MAF, GATA4 and Cbp/p300 can also bind the complex. NFATC proteins bind to DNA as monomers. Interacts with HOMER2 and HOMER3; this interaction may compete with calcineurin/PPP3CA-binding and hence prevent NFATC1 dephosphorylation and activation. Interacts with TLE6/GRG6. Post-translationally, phosphorylated by NFATC-kinase and GSK3B; phosphorylation induces NFATC1 nuclear exit and dephosphorylation by calcineurin promotes nuclear import. Phosphorylation by PKA and DYRK2 negatively modulates nuclear accumulation, and promotes subsequent phosphorylation by GSK3B or casein kinase 1. As to expression, expressed in thymus, peripheral leukocytes as T-cells and spleen. Isoforms A are preferentially expressed in effector T-cells (thymus and peripheral leukocytes) whereas isoforms B and isoforms C are preferentially expressed in naive T-cells (spleen). Isoforms B are expressed in naive T-cells after first antigen exposure and isoforms A are expressed in effector T-cells after second antigen exposure. Isoforms IA are widely expressed but not detected in liver nor pancreas, neural expression is strongest in corpus callosum. Isoforms IB are expressed mostly in muscle, cerebellum, placenta and thymus, neural expression in fetal and adult brain, strongest in corpus callosum.

The protein localises to the cytoplasm. The protein resides in the nucleus. Plays a role in the inducible expression of cytokine genes in T-cells, especially in the induction of the IL-2 or IL-4 gene transcription. Also controls gene expression in embryonic cardiac cells. Could regulate not only the activation and proliferation but also the differentiation and programmed death of T-lymphocytes as well as lymphoid and non-lymphoid cells. Required for osteoclastogenesis and regulates many genes important for osteoclast differentiation and function. This chain is Nuclear factor of activated T-cells, cytoplasmic 1 (NFATC1), found in Homo sapiens (Human).